A 406-amino-acid polypeptide reads, in one-letter code: Succinylornithine transaminase (406 aa).

Lys-252 carries the N6-(pyridoxal phosphate)lysine modification.

It belongs to the class-III pyridoxal-phosphate-dependent aminotransferase family. AstC subfamily. Pyridoxal 5'-phosphate serves as cofactor.

It catalyses the reaction N(2)-succinyl-L-ornithine + 2-oxoglutarate = N-succinyl-L-glutamate 5-semialdehyde + L-glutamate. The protein operates within amino-acid degradation; L-arginine degradation via AST pathway; L-glutamate and succinate from L-arginine: step 3/5. Its function is as follows. Catalyzes the transamination of N(2)-succinylornithine and alpha-ketoglutarate into N(2)-succinylglutamate semialdehyde and glutamate. Can also act as an acetylornithine aminotransferase. The protein is Succinylornithine transaminase of Escherichia coli O7:K1 (strain IAI39 / ExPEC).